Consider the following 512-residue polypeptide: MKKQHDTIIVLDFGSQYNQLIARRIREFGVYSELHPHTITAEEIKAMNPKGIIFSGGPNSVYGEGALHCDEKIFELGLPIFGICYGMQLMTQHFGGKVERANHREYGKAVLKVENESKLYANLPEEQVVWMSHGDLVTGLPEGFVVDATSESCPIAGMSNEAKNLYGVQFHPEVRHSEHGNDLIKNFVFGVCGCSEGWNMENFIEVELEKIRETVGDKKVLCALSGGVDSSVVAVLIHKAIGDQLTCIFVDHGLLRKGEAEGVMKTFSEGFHMNVIKVDAKDRFMDKLKGVEDPEQKRKIIGNEFIYVFDDEASKLQGMDFLAQGTLYTDIVESGTATAQTIKSHHNVGGLPEDMQFKLIEPLNTLFKDEVRVLGSELGIPDEIVWRQPFPGPGLGIRVLGEITEEKLEIVRESDAILREEIIKAGLDREIWQYFTALPGMRSVGVMGDERTYDYTVGIRAVTSIDGMTADWARIPWDVLEKISVRIVNEVKHVNRIVYDVTSKPPATIEWE.

One can recognise a Glutamine amidotransferase type-1 domain in the interval 7 to 197 (TIIVLDFGSQ…VFGVCGCSEG (191 aa)). Cys-84 (nucleophile) is an active-site residue. Residues His-171 and Glu-173 contribute to the active site. A GMPS ATP-PPase domain is found at 198-387 (WNMENFIEVE…LGIPDEIVWR (190 aa)). 225–231 (SGGVDSS) contacts ATP.

As to quaternary structure, homodimer.

The enzyme catalyses XMP + L-glutamine + ATP + H2O = GMP + L-glutamate + AMP + diphosphate + 2 H(+). It functions in the pathway purine metabolism; GMP biosynthesis; GMP from XMP (L-Gln route): step 1/1. Catalyzes the synthesis of GMP from XMP. The sequence is that of GMP synthase [glutamine-hydrolyzing] from Bacillus cereus (strain B4264).